The sequence spans 200 residues: Serine/threonine-protein kinase mos (200 aa).

Residues 2-200 form the Protein kinase domain; sequence LCLLQPLGSG…ELLKGERVTA (199 aa). ATP is bound by residues 8-16 and K29; that span reads LGSGGFGSV. D143 acts as the Proton acceptor in catalysis.

This sequence belongs to the protein kinase superfamily. Ser/Thr protein kinase family.

The catalysed reaction is L-seryl-[protein] + ATP = O-phospho-L-seryl-[protein] + ADP + H(+). The enzyme catalyses L-threonyl-[protein] + ATP = O-phospho-L-threonyl-[protein] + ADP + H(+). The sequence is that of Serine/threonine-protein kinase mos (MOS) from Apteryx australis (Southern brown kiwi).